The sequence spans 808 residues: MLFFIKVFMKTILSVLLLFFIFASSFTLVVGLAGCRPDQIQALTQFKNEFDSSDCNQTDYFNGVQCDNKTGVVTKLQLPSGCLHGSMKPNSSLFGLQHLRYLNLSNNNFTSASLPSGFGNLNRLEVLYLSSNGFLGQVPSSFSNLSQLNILDLSHNELTGSFPFVQNLTKLSILVLSYNHFSGTIPSSLLTLPFLSSLDLRENYLTGSIEAPNSSTSSRLEFMYLGNNHFEGQILEPISKLINLKHLDLSFLKTSYPIDLNLFSSFKSLVRLVLSGNSLLATSITSDSKIPLNLENLVLLSCGLIEFPTILKNLTKLEHIDLSNNKIKGKVPEWFWNLPRLRRVNLFNNLFTDLEGSEEVLVNSSVRLLDLAYNHFRGPFPKPPLSINLLSAWNNSFTGNIPLETCNRSSLAILDLSYNNLTGPIPRCLSDFQESLIVVNLRKNNLEGSLPDIFSDGALLRTLDVGYNQLTGKLPRSLLNCSMLRFVSVDHNKIKDTFPFWLKALPDLQALTLRSNKFHGPISPPDRGPLAFPKLRILEISDNNFTGSLPPNYFVNWEASSLQMNEDGRIYMGDYNNPYYIYEDTVDLQYKGLFMEQGKVLTSYATIDFSGNKLEGQIPESIGLLKALIALNLSNNAFTGHIPLSLANVTELESLDLSRNQLSGTIPNGLKTLSFLAYISVAHNQLIGEIPQGTQITGQSKSSFEGNAGLCGLPLQGSCFAPPTPQPKEEDEDEEVLNWKAVVIGYWPGLLLGLIMAHVIASFKPKWLVKIVGPEKRKEDNPVRLFMTLDSRWDSFNNKKNVEQKSDM.

Positions 1-31 are cleaved as a signal peptide; it reads MLFFIKVFMKTILSVLLLFFIFASSFTLVVG. Residues 32 to 740 lie on the Extracellular side of the membrane; the sequence is LAGCRPDQIQ…DEDEEVLNWK (709 aa). Residues asparagine 56, asparagine 68, asparagine 90, asparagine 103, asparagine 108, asparagine 144, and asparagine 167 are each glycosylated (N-linked (GlcNAc...) asparagine). LRR repeat units follow at residues 96-120, 122-144, 145-170, 172-192, 193-218, 220-241, 242-265, 266-291, 293-314, 315-338, 340-363, and 364-387; these read LQHL…GFGN, NRLE…SFSN, LSQL…NLTK, SILV…LLTL, PFLS…STSS, LEFM…ISKL, INLK…LFSS, FKSL…SKIP, NLEN…LKNL, TKLE…FWNL, RLRR…VLVN, and SSVR…PLSI. Asparagine 213 is a glycosylation site (N-linked (GlcNAc...) asparagine). N-linked (GlcNAc...) asparagine glycosylation occurs at asparagine 313. Asparagine 363 carries N-linked (GlcNAc...) asparagine glycosylation. The LRR 13; degenerate repeat unit spans residues 388-407; it reads NLLSAWNNSFTGNIPLETCN. Asparagine 394, asparagine 407, and asparagine 420 each carry an N-linked (GlcNAc...) asparagine glycan. LRR repeat units lie at residues 408 to 434, 436 to 456, 457 to 481, 483 to 504, 505 to 529, 532 to 556, 601 to 625, 626 to 649, 650 to 673, and 675 to 698; these read RSSL…DFQE, LIVV…IFSD, GALL…LLNC, MLRF…WLKA, LPDL…DRGP, FPKL…YFVN, LTSY…IGLL, KALI…LANV, TELE…LKTL, and FLAY…QITG. Asparagine 480 carries N-linked (GlcNAc...) asparagine glycosylation. Asparagine 544 carries N-linked (GlcNAc...) asparagine glycosylation. 2 N-linked (GlcNAc...) asparagine glycosylation sites follow: asparagine 632 and asparagine 648. Residues 741–761 traverse the membrane as a helical segment; the sequence is AVVIGYWPGLLLGLIMAHVIA. The Cytoplasmic segment spans residues 762–808; the sequence is SFKPKWLVKIVGPEKRKEDNPVRLFMTLDSRWDSFNNKKNVEQKSDM.

This sequence belongs to the RLP family.

It is found in the cell membrane. This Arabidopsis thaliana (Mouse-ear cress) protein is Receptor like protein 27.